Consider the following 619-residue polypeptide: MYGFVNHALELLVIRNYGPEVWEDIKKEAQLDEEGQFLVRIIYDDSKTYDLVAAASKVLNLNAGEILQMFGKMFFVFCQESGYDTILRVLGSNVREFLQNLDALHDHLATIYPGMRAPSFRCTDAEKGKGLILHYYSEREGLQDIVIGIIKTVAQQIHGTEIDMKVIQQRSEECDHTQFLIEEKESKEEDFYEDLDRFEENGTQDSRISPYTFCKAFPFHIIFDRDLVVTQCGNAIYRVLPQLQPGKCSLLSVFSLVRPHIDISFHGILSHINTVFVLRSKEGLLDVEKLECEDELTGAEISCLRLKGQMIYLPEADSILFLCSPSVMNLDDLTRRGLYLSDIPLHDATRDLVLLGEQFREEYKLTQELEILTDRLQLTLRALEDEKKKTDTLLYSVLPPSVANELRHKRPVPAKRYDNVTILFSGIVGFNAFCSKHASGEGAMKIVNLLNDLYTRFDTLTDSRKNPFVYKVETVGDKYMTVSGLPEPCIHHARSICHLALDMMEIAGQVQVDGESVQITIGIHTGEVVTGVIGQRMPRYCLFGNTVNLTSRTETTGEKGKINVSEYTYRCLMSPENSDPQFHLEHRGPVSMKGKKEPMQVWFLSRKNTGTEETNQDEN.

Histidine 105 is a heme binding site. In terms of domain architecture, Guanylate cyclase spans 421 to 554; sequence TILFSGIVGF…NTVNLTSRTE (134 aa).

The protein belongs to the adenylyl cyclase class-4/guanylyl cyclase family. In terms of assembly, the active enzyme is formed by a heterodimer of an alpha and a beta subunit. Homotetramer; dimer of dimers (in vitro). Heterodimer with GUCY1A1. Can also form inactive homodimers in vitro. Heme serves as cofactor. Lung and brain.

It localises to the cytoplasm. The catalysed reaction is GTP = 3',5'-cyclic GMP + diphosphate. Activated by nitric oxide in the presence of magnesium or manganese ions. In terms of biological role, mediates responses to nitric oxide (NO) by catalyzing the biosynthesis of the signaling molecule cGMP. The polypeptide is Guanylate cyclase soluble subunit beta-1 (Gucy1b1) (Rattus norvegicus (Rat)).